A 92-amino-acid polypeptide reads, in one-letter code: UPF0250 protein XAC0666 (92 aa).

It belongs to the UPF0250 family.

This Xanthomonas axonopodis pv. citri (strain 306) protein is UPF0250 protein XAC0666.